Consider the following 386-residue polypeptide: N-terminal EF-hand calcium-binding protein 2 (386 aa).

Arg-10 is subject to Omega-N-methylarginine. The residue at position 42 (Arg-42) is an Asymmetric dimethylarginine. 2 consecutive EF-hand domains span residues 60 to 95 (GGTA…GVLN) and 96 to 129 (EKEL…HMGD). Ca(2+) is bound by residues Asp-73, Asn-75, Asp-77, Lys-79, Glu-84, Asp-107, Asp-109, Thr-111, His-113, and Glu-118. Residues 170-201 (LKETANQIQSLLSSVESAVEAIEEQTSQLRQN) are a coiled coil. An ABM domain is found at 286–375 (QLVRQEMAVC…SQPEALSRIL (90 aa)).

Interacts (calcium-dependent) with ADORA2A and GRM5. Expressed in brain. Expressed in the spinal dorsal horn with especially strong expression in lamina IIi; found in excitory synaptic boutons and in ependymal cells (at protein level).

The protein resides in the cytoplasm. It is found in the cell projection. The protein localises to the dendrite. It localises to the axon. Its subcellular location is the cell membrane. In terms of biological role, may act as a signaling scaffold protein that senses intracellular calcium. Can modulate ligand-induced internalization of ADORA2A and coupling efficiency of mGluR5/GRM5; for both receptors may regulate signaling activity such as promoting MAPK1/3 (ERK1/2) activation. The protein is N-terminal EF-hand calcium-binding protein 2 (NECAB2) of Homo sapiens (Human).